A 141-amino-acid polypeptide reads, in one-letter code: Cytochrome c-type biogenesis protein CcmE (141 aa).

The Cytoplasmic portion of the chain corresponds to 1–7 (MRARTRR). The chain crosses the membrane as a helical; Signal-anchor for type II membrane protein span at residues 8–28 (LYTFGIAAALIVAAAALAFFA). Residues 29–141 (LRENANLFYT…RELKPLEAGG (113 aa)) lie on the Periplasmic side of the membrane. H125 and Y129 together coordinate heme.

Belongs to the CcmE/CycJ family.

Its subcellular location is the cell inner membrane. Functionally, heme chaperone required for the biogenesis of c-type cytochromes. Transiently binds heme delivered by CcmC and transfers the heme to apo-cytochromes in a process facilitated by CcmF and CcmH. In Hyphomonas neptunium (strain ATCC 15444), this protein is Cytochrome c-type biogenesis protein CcmE.